The primary structure comprises 157 residues: Endoribonuclease YbeY (157 aa).

Zn(2+)-binding residues include histidine 114, histidine 118, and histidine 124.

It belongs to the endoribonuclease YbeY family. Zn(2+) serves as cofactor.

The protein localises to the cytoplasm. In terms of biological role, single strand-specific metallo-endoribonuclease involved in late-stage 70S ribosome quality control and in maturation of the 3' terminus of the 16S rRNA. This chain is Endoribonuclease YbeY, found in Klebsiella pneumoniae (strain 342).